The following is a 178-amino-acid chain: Disulfide bond formation protein B (178 aa).

The Cytoplasmic portion of the chain corresponds to methionine 1–glycine 14. Residues tryptophan 15–tyrosine 31 traverse the membrane as a helical segment. The Periplasmic segment spans residues phenylalanine 32–valine 49. The cysteines at positions 41 and 44 are disulfide-linked. Residues alanine 50–proline 65 traverse the membrane as a helical segment. At serine 66–phenylalanine 72 the chain is on the cytoplasmic side. A helical transmembrane segment spans residues leucine 73 to leucine 90. Residues lysine 91–glutamine 145 lie on the Periplasmic side of the membrane. Cysteine 105 and cysteine 131 are disulfide-bonded. Residues tryptophan 146–serine 164 form a helical membrane-spanning segment. Residues glutamine 165 to arginine 178 are Cytoplasmic-facing.

This sequence belongs to the DsbB family.

It is found in the cell inner membrane. Required for disulfide bond formation in some periplasmic proteins. Acts by oxidizing the DsbA protein. This is Disulfide bond formation protein B from Mannheimia succiniciproducens (strain KCTC 0769BP / MBEL55E).